A 160-amino-acid chain; its full sequence is Transcription elongation factor GreA (160 aa).

A coiled-coil region spans residues 4-70; sequence QKQYPMTQEG…IEQDIQRIEH (67 aa).

It belongs to the GreA/GreB family.

Functionally, necessary for efficient RNA polymerase transcription elongation past template-encoded arresting sites. The arresting sites in DNA have the property of trapping a certain fraction of elongating RNA polymerases that pass through, resulting in locked ternary complexes. Cleavage of the nascent transcript by cleavage factors such as GreA or GreB allows the resumption of elongation from the new 3'terminus. GreA releases sequences of 2 to 3 nucleotides. This Staphylococcus carnosus (strain TM300) protein is Transcription elongation factor GreA.